We begin with the raw amino-acid sequence, 238 residues long: tRNA (guanine-N(7)-)-methyltransferase (238 aa).

Positions 68, 93, 120, and 143 each coordinate S-adenosyl-L-methionine. Asp-143 is an active-site residue. Residues Lys-147, Asp-179, and 216–219 (TKFE) contribute to the substrate site.

It belongs to the class I-like SAM-binding methyltransferase superfamily. TrmB family.

It carries out the reaction guanosine(46) in tRNA + S-adenosyl-L-methionine = N(7)-methylguanosine(46) in tRNA + S-adenosyl-L-homocysteine. It participates in tRNA modification; N(7)-methylguanine-tRNA biosynthesis. Functionally, catalyzes the formation of N(7)-methylguanine at position 46 (m7G46) in tRNA. The polypeptide is tRNA (guanine-N(7)-)-methyltransferase (Ectopseudomonas mendocina (strain ymp) (Pseudomonas mendocina)).